The chain runs to 314 residues: MTTATPSSPSTAPLPTRRAMFVHAHPDDEVISTGIALASYAASPDTHVTLVTCTLGEEGEVLVPELIHLRADRGDQLGGYRIGELAGACAALGITDQRFLGGPGRWRDSGMIGTPANDHPRCLWRADLDEAAAELVRIVREVRPQVLVSYDARGGYGHPDHIRAHELTRRAFTDAADPSFAPQAGSVWQVAKRYETALARSSAVAGFEYFRDSAAESNPFAGLTSVDELGVTLVDDADITTELSAPHFFEAKIAAMRSHRTQMSVDGFFFALADGIGQRAWSVEHFVLAEGARGPGDGPDGRERDLFAGLVCEP.

Zn(2+) contacts are provided by H25, D28, and H161.

This sequence belongs to the MshB deacetylase family. Zn(2+) serves as cofactor.

The catalysed reaction is 1D-myo-inositol 2-acetamido-2-deoxy-alpha-D-glucopyranoside + H2O = 1D-myo-inositol 2-amino-2-deoxy-alpha-D-glucopyranoside + acetate. In terms of biological role, catalyzes the deacetylation of 1D-myo-inositol 2-acetamido-2-deoxy-alpha-D-glucopyranoside (GlcNAc-Ins) in the mycothiol biosynthesis pathway. The chain is 1D-myo-inositol 2-acetamido-2-deoxy-alpha-D-glucopyranoside deacetylase 2 from Frankia casuarinae (strain DSM 45818 / CECT 9043 / HFP020203 / CcI3).